A 2261-amino-acid chain; its full sequence is Phospholipid-transporting ATPase ABCA1 (2261 aa).

Residue Cys3 is the site of S-palmitoyl cysteine attachment. N-linked (GlcNAc...) asparagine glycosylation is present at Asn14. A helical transmembrane segment spans residues 22–42 (TCQLLLEVAWPLFIFLILISV). Residue Cys23 is the site of S-palmitoyl cysteine attachment. Residues 43–639 (RLSYPPYEQH…DIFLRVMSRS (597 aa)) are Extracellular-facing. Residues 69–80 (WVQGIICNANNP) are annulus domain 1. A disulfide bridge links Cys75 with Cys309. Asn98, Asn151, Asn161, Asn196, Asn244, Asn292, Asn337, and Asn349 each carry an N-linked (GlcNAc...) asparagine glycan. The tract at residues 368–379 (SRIIWKALKPLL) is annulus domain 2. Asn400, Asn478, Asn489, and Asn521 each carry an N-linked (GlcNAc...) asparagine glycan. The tract at residues 564-594 (ERTNKIKDGYWDPGPRADPFEDMRYVWGGFA) is gateway domain. Transmembrane regions (helical) follow at residues 640-660 (MPLFMTLAWIYSVAVIIKSIV), 683-703 (FSWFVSSLIPLLVSAGLLVVI), 716-736 (SVVFVFLSVFAMVTILQCFLI), 745-765 (LAAACGGIIYFTLYLPYVLCV), and 777-797 (IFASLLSPVAFGFGCEYFALF). Asn820 carries N-linked (GlcNAc...) asparagine glycosylation. A helical transmembrane segment spans residues 827 to 847 (MMLFDTFLYGVMTWYIEAVFP). One can recognise an ABC transporter 1 domain in the interval 899-1131 (VSIQNLVKVY…LGTGYYLTLV (233 aa)). 933–940 (GHNGAGKT) contributes to the ATP binding site. A helical membrane pass occupies residues 941–961 (TTMSILTGLFPPTSGTAYILG). Ser1042 carries the post-translational modification Phosphoserine; by PKA. 2 S-palmitoyl cysteine lipidation sites follow: Cys1110 and Cys1111. N-linked (GlcNAc...) asparagine glycosylation is found at Asn1144 and Asn1294. The disordered stretch occupies residues 1285 to 1310 (FTEDDAVDPNDSDIDPESRETDLLSG). Residues 1287–1299 (EDDAVDPNDSDID) are compositionally biased toward acidic residues. Ser1296 is modified (phosphoserine). Residues 1351 to 1371 (IVLPAVFVCIALVFSLIVPPF) form a helical membrane-spanning segment. Residues 1372–1656 (GKYPSLELQP…ALMTTSVDVL (285 aa)) lie on the Extracellular side of the membrane. A glycan (N-linked (GlcNAc...) asparagine) is linked at Asn1453. A disulfide bridge links Cys1463 with Cys1477. N-linked (GlcNAc...) asparagine glycans are attached at residues Asn1499, Asn1504, and Asn1637. 6 helical membrane passes run 1657–1677 (VSICVIFAMSFVPASFVVFLI), 1703–1723 (FVWDMCNYVVPATLVIIIFIC), 1735–1755 (LPVLALLLLLYGWSITPLMYP), 1768–1788 (VVLTSVNLFIGINGSVATFVL), 1802–1822 (ILKSVFLIFPHFCLGRGLIDM), and 1852–1872 (NLFAMAVEGVVFFLITVLIQY). One can recognise an ABC transporter 2 domain in the interval 1912-2144 (LEIKELTKIY…FGDGYTIVVR (233 aa)). 1946–1953 (GVNGAGKS) contributes to the ATP binding site. A glycan (N-linked (GlcNAc...) asparagine) is linked at Asn2044. Ser2054 carries the post-translational modification Phosphoserine; by PKA. N-linked (GlcNAc...) asparagine glycosylation occurs at Asn2238.

Belongs to the ABC transporter superfamily. ABCA family. In terms of assembly, interacts with MEGF10. May interact with APOE1; functionally associated with APOE1 in the biogenesis of HDLs. Interacts with ABCA8; this interaction potentiates cholesterol efflux. Interacts with ABCA12 and NR1H2; this interaction is required for ABCA1 localization to the cell surface and is necessary for its normal activity and stability. In terms of processing, phosphorylation on Ser-2054 regulates phospholipid efflux. Palmitoylated by ZDHHC8. Palmitoylation is essential for localization to the plasma membrane. Widely expressed in adult tissues. Highest levels are found in pregnant uterus and uterus.

It is found in the cell membrane. The protein localises to the endosome. It carries out the reaction ATP + H2O + phospholipidSide 1 = ADP + phosphate + phospholipidSide 2.. The catalysed reaction is a 1,2-diacyl-sn-glycero-3-phosphocholine(out) + ATP + H2O = a 1,2-diacyl-sn-glycero-3-phosphocholine(in) + ADP + phosphate + H(+). It catalyses the reaction a 1,2-diacyl-sn-glycero-3-phospho-L-serine(out) + ATP + H2O = a 1,2-diacyl-sn-glycero-3-phospho-L-serine(in) + ADP + phosphate + H(+). The enzyme catalyses a sphingomyelin(in) + ATP + H2O = a sphingomyelin(out) + ADP + phosphate + H(+). It carries out the reaction cholesterol(in) + ATP + H2O = cholesterol(out) + ADP + phosphate + H(+). With respect to regulation, ATPase activity is decreased by cholesterol and ceramide. ATPase activity is stimulated by phosphatidylcholine and to a lesser degree by phosphatidylserine and sphingomyelin. Phospholipid translocase activity is highly reduced by berylium fluoride and aluminum flouride and reduced by N-ethylmaleimide. Catalyzes the translocation of specific phospholipids from the cytoplasmic to the extracellular/lumenal leaflet of membrane coupled to the hydrolysis of ATP. Thereby, participates in phospholipid transfer to apolipoproteins to form nascent high density lipoproteins/HDLs. Transports preferentially phosphatidylcholine over phosphatidylserine. May play a similar role in the efflux of intracellular cholesterol to apolipoproteins and the formation of nascent high density lipoproteins/HDLs. Translocates phospholipids from the outer face of the plasma membrane and forces it through its gateway and annulus into an elongated hydrophobic tunnel in its extracellular domain. The sequence is that of Phospholipid-transporting ATPase ABCA1 from Mus musculus (Mouse).